We begin with the raw amino-acid sequence, 250 residues long: Proteasome subunit alpha type-4-A (250 aa).

Glycyl lysine isopeptide (Lys-Gly) (interchain with G-Cter in ubiquitin) cross-links involve residues K40 and K64.

Belongs to the peptidase T1A family. Component of the 20S core complex of the 26S proteasome. The 26S proteasome is composed of a core protease (CP), known as the 20S proteasome, capped at one or both ends by the 19S regulatory particle (RP/PA700). The 20S proteasome core is composed of 28 subunits that are arranged in four stacked rings, resulting in a barrel-shaped structure. The two end rings are each formed by seven alpha subunits, and the two central rings are each formed by seven beta subunits. The catalytic chamber with the active sites is on the inside of the barrel. In terms of tissue distribution, ubiquitous low levels, higher expression in siliques and flowers.

The protein resides in the cytoplasm. Its subcellular location is the nucleus. The proteasome is a multicatalytic proteinase complex which is characterized by its ability to cleave peptides with Arg, Phe, Tyr, Leu, and Glu adjacent to the leaving group at neutral or slightly basic pH. The proteasome has an ATP-dependent proteolytic activity. This chain is Proteasome subunit alpha type-4-A (PAC1), found in Arabidopsis thaliana (Mouse-ear cress).